Consider the following 908-residue polypeptide: Protein translocase subunit SecA (908 aa).

Residues Gln90, 108 to 112 (GEGKT), and Asp503 each bind ATP. Residues 846–864 (AAAAEAPVAPAPQPAAAAP) are compositionally biased toward low complexity. A disordered region spans residues 846-884 (AAAAEAPVAPAPQPAAAAPQPTPELVGAEAGEPDPAAWG). Positions 892, 894, 903, and 904 each coordinate Zn(2+).

It belongs to the SecA family. Monomer and homodimer. Part of the essential Sec protein translocation apparatus which comprises SecA, SecYEG and auxiliary proteins SecDF-YajC and YidC. The cofactor is Zn(2+).

It is found in the cell inner membrane. The protein localises to the cytoplasm. The enzyme catalyses ATP + H2O + cellular proteinSide 1 = ADP + phosphate + cellular proteinSide 2.. Part of the Sec protein translocase complex. Interacts with the SecYEG preprotein conducting channel. Has a central role in coupling the hydrolysis of ATP to the transfer of proteins into and across the cell membrane, serving both as a receptor for the preprotein-SecB complex and as an ATP-driven molecular motor driving the stepwise translocation of polypeptide chains across the membrane. The polypeptide is Protein translocase subunit SecA (Cereibacter sphaeroides (strain KD131 / KCTC 12085) (Rhodobacter sphaeroides)).